A 209-amino-acid polypeptide reads, in one-letter code: Pyridoxine/pyridoxamine 5'-phosphate oxidase (209 aa).

Substrate-binding positions include 2–5 (RVEY) and K66. Residues 61–66 (RTVLCK), 76–77 (FT), K83, and Q105 each bind FMN. Y123, R127, and S131 together coordinate substrate. Residues 140–141 (QS) and W186 contribute to the FMN site. 192–194 (RVH) serves as a coordination point for substrate. R196 serves as a coordination point for FMN.

Belongs to the pyridoxamine 5'-phosphate oxidase family. Homodimer. The cofactor is FMN.

The catalysed reaction is pyridoxamine 5'-phosphate + O2 + H2O = pyridoxal 5'-phosphate + H2O2 + NH4(+). It carries out the reaction pyridoxine 5'-phosphate + O2 = pyridoxal 5'-phosphate + H2O2. Its pathway is cofactor metabolism; pyridoxal 5'-phosphate salvage; pyridoxal 5'-phosphate from pyridoxamine 5'-phosphate: step 1/1. The protein operates within cofactor metabolism; pyridoxal 5'-phosphate salvage; pyridoxal 5'-phosphate from pyridoxine 5'-phosphate: step 1/1. In terms of biological role, catalyzes the oxidation of either pyridoxine 5'-phosphate (PNP) or pyridoxamine 5'-phosphate (PMP) into pyridoxal 5'-phosphate (PLP). The polypeptide is Pyridoxine/pyridoxamine 5'-phosphate oxidase (Mycobacterium sp. (strain JLS)).